The following is a 142-amino-acid chain: Large ribosomal subunit protein uL16 (142 aa).

It belongs to the universal ribosomal protein uL16 family. Part of the 50S ribosomal subunit.

Its function is as follows. Binds 23S rRNA and is also seen to make contacts with the A and possibly P site tRNAs. The chain is Large ribosomal subunit protein uL16 from Thermotoga sp. (strain RQ2).